The sequence spans 249 residues: Phosphomannomutase (249 aa).

Aspartate 15 functions as the Nucleophile in the catalytic mechanism. Mg(2+) is bound by residues aspartate 15 and aspartate 17. Aspartate 17 acts as the Proton donor/acceptor in catalysis. Positions 24, 126, 137, 144, 182, and 184 each coordinate alpha-D-mannose 1-phosphate. Residues aspartate 210, phenylalanine 222, and threonine 227 each coordinate Mg(2+).

This sequence belongs to the eukaryotic PMM family. As to quaternary structure, homodimer. It depends on Mg(2+) as a cofactor. In terms of tissue distribution, expressed in roots, leaves, flag leaves and immature spikes.

Its subcellular location is the cytoplasm. It carries out the reaction alpha-D-mannose 1-phosphate = D-mannose 6-phosphate. It participates in nucleotide-sugar biosynthesis; GDP-alpha-D-mannose biosynthesis; alpha-D-mannose 1-phosphate from D-fructose 6-phosphate: step 2/2. Its function is as follows. Catalyzes the interconversion of mannose-6-phosphate to mannose-1-phosphate, the precursor for the synthesis of GDP-mannose. GDP-mannose is an essential sugar nucleotide for the synthesis of D-mannose-containing cell wall polysaccharides (galactomannans and glucomannans), glycolipids, glycoproteins and the antioxidant L-ascorbate. Can complement the yeast temperature-sensitive mutant sec53-6. This is Phosphomannomutase from Triticum aestivum (Wheat).